Reading from the N-terminus, the 468-residue chain is Na(+)/H(+) antiporter NhaA (468 aa).

12 consecutive transmembrane segments (helical) span residues 28–48, 79–99, 115–135, 143–163, 173–193, 196–216, 219–239, 240–260, 317–337, 356–376, 392–412, and 426–446; these read FLHVEAVSGAVLLAAAAIALV, LHFWINDALMTLFFLAVGMEI, ALPLAAALGGVVAPALIYLAF, AGWAVPTATDIAFAVGVLALL, IFLLALAIIDDIIAVLIIAFF, GGLDYSGFAVAALGIAIVLGL, IGIGTAYAYVLPGAIVWTGLL, MTGAHPTLAGVVLGLMTPVVP, ALHPWVAYAIMPLFALANAGV, VAGALIVGKPAGVIAMSWLLV, IVLIGLLAGVGFTMSIFIAML, and LGVLLGSLATAMLGLAWGAIY.

This sequence belongs to the NhaA Na(+)/H(+) (TC 2.A.33) antiporter family.

Its subcellular location is the cell inner membrane. The catalysed reaction is Na(+)(in) + 2 H(+)(out) = Na(+)(out) + 2 H(+)(in). Functionally, na(+)/H(+) antiporter that extrudes sodium in exchange for external protons. The polypeptide is Na(+)/H(+) antiporter NhaA (Bordetella petrii (strain ATCC BAA-461 / DSM 12804 / CCUG 43448)).